The primary structure comprises 152 residues: Superoxide dismutase [Cu-Zn] (152 aa).

Positions 45, 47, and 62 each coordinate Cu cation. C56 and C145 are disulfide-bonded. Zn(2+) is bound by residues H62, H70, H79, and D82. Residue H119 coordinates Cu cation.

It belongs to the Cu-Zn superoxide dismutase family. In terms of assembly, homodimer. Cu cation serves as cofactor. The cofactor is Zn(2+).

Its subcellular location is the cytoplasm. The catalysed reaction is 2 superoxide + 2 H(+) = H2O2 + O2. Destroys radicals which are normally produced within the cells and which are toxic to biological systems. This chain is Superoxide dismutase [Cu-Zn] (SODCC), found in Spinacia oleracea (Spinach).